The following is a 256-amino-acid chain: Short chain dehydrogenase adrF (256 aa).

Residues isoleucine 11, aspartate 57, arginine 119, tyrosine 151, lysine 155, and valine 184 each contribute to the NADP(+) site. The active-site Proton acceptor is the tyrosine 151. The active-site Lowers pKa of active site Tyr is the lysine 155.

This sequence belongs to the short-chain dehydrogenases/reductases (SDR) family.

It functions in the pathway secondary metabolite biosynthesis; terpenoid biosynthesis. Functionally, short chain dehydrogenase; part of the gene cluster that mediates the biosynthesis of andrastins, meroterpenoid compounds that exhibit inhibitory activity against ras farnesyltransferase, suggesting that they could be promising leads for antitumor agents. The first step of the pathway is the synthesis of 3,5-dimethylorsellinic acid (DMOA) by the polyketide synthase adrD via condensation of one acetyl-CoA starter unit with 3 malonyl-CoA units and 2 methylations. DMAO is then converted to farnesyl-DMAO by the prenyltransferase adrG. The methyltransferase adrK catalyzes the methylation of the carboxyl group of farnesyl-DMAO to farnesyl-DMAO methyl ester which is further converted to epoxyfarnesyl-DMAO methyl ester by the FAD-dependent monooxygenase adrH. The terpene cyclase adrI then catalyzes the carbon skeletal rearrangement to generate the andrastin E, the first compound in the pathway having the andrastin scaffold, with the tetracyclic ring system. The post-cyclization tailoring enzymes adrF, adrE, adrJ, and adrA, are involved in the conversion of andrastin E into andrastin A. The short chain dehydrogenase adrF is responsible for the oxidation of the C-3 a hydroxyl group of andrastin E to yield the corresponding ketone, andrastin D. The ketoreductase adrE stereoselectively reduces the carbonyl moiety to reverse the stereochemistry of the C-3 position to yield andrastin F. The acetyltransferase adrJ is the acetyltransferase that attaches the acetyl group to the C-3 hydroxyl group of andrastin F to yield andrastin C. Finally, the cytochrome P450 monooxygenase adrA catalyzes two sequential oxidation reactions of the C-23 methyl group, to generate the corresponding alcohol andrastin B, and aldehyde andrastin A. This Penicillium roqueforti protein is Short chain dehydrogenase adrF.